Reading from the N-terminus, the 86-residue chain is SPCIIIDYLCVTETCFCERFKTNKELLEYITVMFTGVQNLLDTLNLGIVGVAQDYSDYNERVDTVAHETAHLIGAPHDEEGPCQDT.

Aspartate 7 serves as a coordination point for Ca(2+). Zn(2+) is bound at residue histidine 67. Glutamate 68 is an active-site residue. Zn(2+) contacts are provided by histidine 71 and histidine 77.

This sequence belongs to the venom metalloproteinase (M12B) family. Zn(2+) is required as a cofactor. As to expression, expressed by the venom gland.

It localises to the secreted. This Tityus serrulatus (Brazilian scorpion) protein is Venom metalloproteinase.